The following is an 88-amino-acid chain: Small ribosomal subunit protein uS17 (88 aa).

Belongs to the universal ribosomal protein uS17 family. Part of the 30S ribosomal subunit.

Functionally, one of the primary rRNA binding proteins, it binds specifically to the 5'-end of 16S ribosomal RNA. The polypeptide is Small ribosomal subunit protein uS17 (Vesicomyosocius okutanii subsp. Calyptogena okutanii (strain HA)).